The sequence spans 136 residues: MRKNSIKNTRINQEVQKELSMLISRELKDPRINPMTSIVAVEVAPDLKTAKVYISVLGDELSQKNTLAGLKSAAPFLRGQLARGINLRNTPELLFVVDQSIEYGVSMSKLINEVNAGNHKASDEEESDDKGHEDEQ.

Residues 116–136 (AGNHKASDEEESDDKGHEDEQ) form a disordered region.

The protein belongs to the RbfA family. Monomer. Binds 30S ribosomal subunits, but not 50S ribosomal subunits or 70S ribosomes.

Its subcellular location is the cytoplasm. In terms of biological role, one of several proteins that assist in the late maturation steps of the functional core of the 30S ribosomal subunit. Associates with free 30S ribosomal subunits (but not with 30S subunits that are part of 70S ribosomes or polysomes). Required for efficient processing of 16S rRNA. May interact with the 5'-terminal helix region of 16S rRNA. This is Ribosome-binding factor A from Lachnoclostridium phytofermentans (strain ATCC 700394 / DSM 18823 / ISDg) (Clostridium phytofermentans).